A 326-amino-acid chain; its full sequence is Homocysteine S-methyltransferase 1 (326 aa).

Residues 9–323 (LLEDLIKKCG…STINAISRDL (315 aa)) form the Hcy-binding domain. Cysteine 241, cysteine 308, and cysteine 309 together coordinate Zn(2+).

Monomer. Zn(2+) serves as cofactor. In terms of tissue distribution, expressed predominantly in roots. Expressed in rosette leaves, cauline leaves and developing seeds.

The catalysed reaction is S-methyl-L-methionine + L-homocysteine = 2 L-methionine + H(+). With respect to regulation, strongly inhibited by methionine. Functionally, catalyzes methyl transfer from S-methylmethionine (SMM) to adenosyl-L-homocysteine (AdoMet). SMM degradation (by HMT-1, HMT-2 and HMT-3) and biosynthesis (by MMT1) constitute the SMM cycle in plants, which is probably required to achieve short term control of AdoMet level. In Arabidopsis thaliana (Mouse-ear cress), this protein is Homocysteine S-methyltransferase 1 (HMT-1).